The following is a 512-amino-acid chain: NAD(P)H-quinone oxidoreductase subunit 2 B, chloroplastic (512 aa).

The next 14 membrane-spanning stretches (helical) occupy residues 31–51 (FIFP…IDLT), 57–77 (IPWL…ALLF), 99–119 (IFQF…VEYI), 124–144 (MAIT…MFLC), 149–169 (LITI…LSGY), 183–203 (YLLM…WLYG), 229–249 (ISIA…LAPF), 261–281 (PTPV…ALAT), 295–315 (WHLL…LIAI), 323–343 (MLAY…IVGD), 354–374 (YMLF…LFGL), 395–415 (ALSL…AGFF), 418–438 (LYLF…IGLL), and 484–504 (MIVC…IIAI).

Belongs to the complex I subunit 2 family. As to quaternary structure, NDH is composed of at least 16 different subunits, 5 of which are encoded in the nucleus.

It localises to the plastid. The protein localises to the chloroplast thylakoid membrane. It catalyses the reaction a plastoquinone + NADH + (n+1) H(+)(in) = a plastoquinol + NAD(+) + n H(+)(out). The enzyme catalyses a plastoquinone + NADPH + (n+1) H(+)(in) = a plastoquinol + NADP(+) + n H(+)(out). Functionally, NDH shuttles electrons from NAD(P)H:plastoquinone, via FMN and iron-sulfur (Fe-S) centers, to quinones in the photosynthetic chain and possibly in a chloroplast respiratory chain. The immediate electron acceptor for the enzyme in this species is believed to be plastoquinone. Couples the redox reaction to proton translocation, and thus conserves the redox energy in a proton gradient. This is NAD(P)H-quinone oxidoreductase subunit 2 B, chloroplastic from Arabidopsis thaliana (Mouse-ear cress).